The following is a 368-amino-acid chain: 2-oxoglutarate-dependent dioxygenase frbJ (368 aa).

The 107-residue stretch at 171-277 (QQHKLKIVKY…RYSIPFFQGV (107 aa)) folds into the Fe2OG dioxygenase domain. Fe cation contacts are provided by H198, D200, and H256. Residue R268 participates in 2-oxoglutarate binding.

Belongs to the iron/ascorbate-dependent oxidoreductase family.

It participates in antifungal biosynthesis. 2-oxoglutarate-dependent dioxygenase; part of the gene cluster that mediates the biosynthesis of the antifungal antibiotic FR901469, an inhibitor of beta-1,3-glucansynthase, exerting antifungal activity against the pathogenes Candida albicans and Aspergillus fumigatus. FR901469 is a cyclic depsipeptide containing 12 amino acid residues and a fatty acid chain. The NRPS frbI contains 12 modules responsible for the formation of the depsipeptide backbone which is denoted as Acyl-Thr-Ala-Tyr-Val-4OHPro-Thr-Thr-3OHPro-threo3OHGln-Gly-Thr-Orn-OH (C71H116N14O23). The PKS frbB is probably involved in the production of the hydrocarbon chain, and the acyl-CoA ligase frbC might be involved in the transport of the chain to the peptide ptoduct of frbI. Because FR901469 contains 3 hydroxylated amino acid residues, the 3 oxygenases frbA, frbH, and frbJ might be participating in amino acid hydroxylation. As no thioesterase domains were detected in frbI or frbB, the thioesterases frbD and frbE may instead release and cyclize the products of the NRPS and PKS, respectively. This Dothideomycetidae sp. (strain 11243) (Fungal sp. (strain No.11243)) protein is 2-oxoglutarate-dependent dioxygenase frbJ.